We begin with the raw amino-acid sequence, 123 residues long: Photosystem II extrinsic protein U (123 aa).

An N-terminal signal peptide occupies residues 1 to 28 (MKTLARILVVFTLIVGLIGFFNPLPAQA).

The protein belongs to the PsbU family. PSII is composed of 1 copy each of membrane proteins PsbA, PsbB, PsbC, PsbD, PsbE, PsbF, PsbH, PsbI, PsbJ, PsbK, PsbL, PsbM, PsbT, PsbX, PsbY, PsbZ, Psb30/Ycf12, peripheral proteins PsbO, CyanoQ (PsbQ), PsbU, PsbV and a large number of cofactors. It forms dimeric complexes.

Its subcellular location is the cellular thylakoid membrane. In terms of biological role, one of the extrinsic, lumenal subunits of photosystem II (PSII). PSII is a light-driven water plastoquinone oxidoreductase, using light energy to abstract electrons from H(2)O, generating a proton gradient subsequently used for ATP formation. The extrinsic proteins stabilize the structure of photosystem II oxygen-evolving complex (OEC), the ion environment of oxygen evolution and protect the OEC against heat-induced inactivation. This is Photosystem II extrinsic protein U from Gloeothece citriformis (strain PCC 7424) (Cyanothece sp. (strain PCC 7424)).